A 293-amino-acid polypeptide reads, in one-letter code: Protease HtpX (293 aa).

2 helical membrane-spanning segments follow: residues 4-24 and 38-58; these read IGLF…VLSL and LTNL…ISLF. A Zn(2+)-binding site is contributed by H145. The active site involves E146. Residue H149 participates in Zn(2+) binding. A run of 2 helical transmembrane segments spans residues 156–176 and 193–213; these read ITLS…ARII and IAFF…ASMI. E222 contacts Zn(2+).

This sequence belongs to the peptidase M48B family. Requires Zn(2+) as cofactor.

It localises to the cell inner membrane. The chain is Protease HtpX from Cellvibrio japonicus (strain Ueda107) (Pseudomonas fluorescens subsp. cellulosa).